The chain runs to 143 residues: Nucleoside diphosphate kinase (143 aa).

ATP is bound by residues Lys-11, Phe-59, Arg-87, Thr-93, Arg-104, and Asn-114. His-117 serves as the catalytic Pros-phosphohistidine intermediate.

Belongs to the NDK family. In terms of assembly, homotetramer. The cofactor is Mg(2+).

The protein resides in the cytoplasm. It carries out the reaction a 2'-deoxyribonucleoside 5'-diphosphate + ATP = a 2'-deoxyribonucleoside 5'-triphosphate + ADP. The enzyme catalyses a ribonucleoside 5'-diphosphate + ATP = a ribonucleoside 5'-triphosphate + ADP. In terms of biological role, major role in the synthesis of nucleoside triphosphates other than ATP. The ATP gamma phosphate is transferred to the NDP beta phosphate via a ping-pong mechanism, using a phosphorylated active-site intermediate. The protein is Nucleoside diphosphate kinase of Idiomarina loihiensis (strain ATCC BAA-735 / DSM 15497 / L2-TR).